The chain runs to 858 residues: Leucine--tRNA ligase (858 aa).

The short motif at 43–54 (PYPSGDGLHVGH) is the 'HIGH' region element. The 'KMSKS' region motif lies at 629–633 (KMSKS). Residue lysine 632 coordinates ATP.

This sequence belongs to the class-I aminoacyl-tRNA synthetase family.

The protein localises to the cytoplasm. It carries out the reaction tRNA(Leu) + L-leucine + ATP = L-leucyl-tRNA(Leu) + AMP + diphosphate. This Treponema denticola (strain ATCC 35405 / DSM 14222 / CIP 103919 / JCM 8153 / KCTC 15104) protein is Leucine--tRNA ligase.